A 126-amino-acid polypeptide reads, in one-letter code: Large ribosomal subunit protein bL12 (126 aa).

It belongs to the bacterial ribosomal protein bL12 family. Homodimer. Part of the ribosomal stalk of the 50S ribosomal subunit. Forms a multimeric L10(L12)X complex, where L10 forms an elongated spine to which 2 to 4 L12 dimers bind in a sequential fashion. Binds GTP-bound translation factors.

Functionally, forms part of the ribosomal stalk which helps the ribosome interact with GTP-bound translation factors. Is thus essential for accurate translation. The protein is Large ribosomal subunit protein bL12 of Methylobacterium sp. (strain 4-46).